The following is a 581-amino-acid chain: uncharacterized protein (581 aa).

Phosphoserine is present on S28. 11 consecutive transmembrane segments (helical) span residues 61–81 (LVLICLVSLVTGAIANDAGSA), 100–120 (AGVLFICVGYFTYLAMPATFL), 125–145 (CVYLVCLLFGMLGSMWFALVK), 187–207 (IYILSTSVGTYLGPLAAGYIA), 214–234 (WIGWWGLIISGITFVLFLFTF), 340–360 (IFLFPAVLYSGLQWGAQDAWL), 382–402 (AVAIMNVPCIIGATIGCIYGG), 426–446 (LWLMILPCIINPIGLFMFGIG), 458–478 (VGLGFIGFGWGCAGDISMAYL), 486–506 (VLEAMVGVSVINNTFGYVFTF), and 522–542 (ISIGVLCFIFIATSFPMILCG).

The protein belongs to the major facilitator superfamily.

Its subcellular location is the cytoplasm. The protein resides in the cell cortex. It is found in the membrane. This is an uncharacterized protein from Schizosaccharomyces pombe (strain 972 / ATCC 24843) (Fission yeast).